The following is a 267-amino-acid chain: Outer membrane protein assembly factor BamD (267 aa).

A signal peptide spans 1-16 (MKKILLTVSLGLALSA). Cys17 carries N-palmitoyl cysteine lipidation. Residue Cys17 is the site of S-diacylglycerol cysteine attachment.

This sequence belongs to the BamD family. In terms of assembly, part of the Bam complex.

Its subcellular location is the cell outer membrane. Its function is as follows. Part of the outer membrane protein assembly complex, which is involved in assembly and insertion of beta-barrel proteins into the outer membrane. Required for efficient transformation of Neisseria gonorrhoeae by species-related DNA. This Neisseria gonorrhoeae protein is Outer membrane protein assembly factor BamD.